Reading from the N-terminus, the 192-residue chain is Secreted phosphoprotein 24 (192 aa).

Residues 1-29 (MGKTPEDFERHTMRSLIFVLALSVFTCSG) form the signal peptide. Intrachain disulfides connect cysteine 92–cysteine 103 and cysteine 116–cysteine 134. A disordered region spans residues 155–192 (TDPRKRGSSRSEAFSSRGRGHSNGDWRKPDYTSPGKVE).

The protein belongs to the SPP2 family. In terms of processing, multiply phosphorylated at serine residues.

It is found in the secreted. Its function is as follows. Could coordinate an aspect of bone turnover. This Gallus gallus (Chicken) protein is Secreted phosphoprotein 24 (SPP2).